The following is a 366-amino-acid chain: Neutral protease 2 homolog MGYG_04094 (366 aa).

Residues 1 to 19 form the signal peptide; that stretch reads MQILAALSAIGALVATATA. The propeptide occupies 20–188; the sequence is AAVPNAPAKQ…NKSRSTIDKR (169 aa). Intrachain disulfides connect cysteine 196-cysteine 267 and cysteine 274-cysteine 292. Histidine 317 provides a ligand contact to Zn(2+). The active site involves glutamate 318. Positions 321 and 332 each coordinate Zn(2+).

The protein belongs to the peptidase M35 family. The cofactor is Zn(2+).

The protein resides in the secreted. The enzyme catalyses Preferential cleavage of bonds with hydrophobic residues in P1'. Also 3-Asn-|-Gln-4 and 8-Gly-|-Ser-9 bonds in insulin B chain.. Its function is as follows. Secreted metalloproteinase that allows assimilation of proteinaceous substrates. Shows high activities on basic nuclear substrates such as histone and protamine. May be involved in virulence. This chain is Neutral protease 2 homolog MGYG_04094, found in Arthroderma gypseum (strain ATCC MYA-4604 / CBS 118893) (Microsporum gypseum).